The following is a 538-amino-acid chain: ESX-3 secretion system ATPase EccB3 (538 aa).

Positions 1–16 (MTNQQHDHDFDHDRRS) are enriched in basic and acidic residues. A disordered region spans residues 1 to 25 (MTNQQHDHDFDHDRRSFASRTPVNN). Residues 75-95 (VLMGVLIVITGLIGSFVFSLI) traverse the membrane as a helical segment.

Belongs to the EccB family. Part of the ESX-3 / type VII secretion system (T7SS), which is composed of cytosolic and membrane components. The ESX-3 membrane complex is composed of EccB3, EccC3, EccD3 and EccE3.

It is found in the cell inner membrane. In terms of biological role, an ATPase. Part of the ESX-3 specialized secretion system, which is important for iron and zinc uptake or homeostasis. The chain is ESX-3 secretion system ATPase EccB3 from Mycobacterium tuberculosis (strain CDC 1551 / Oshkosh).